The chain runs to 301 residues: G-protein coupled receptor homolog U51 (301 aa).

Residues 1–15 (MEKETKSLAWPATAE) are Extracellular-facing. Residues 16–36 (FYGWVFIFSSIQLCTMVLLTV) form a helical membrane-spanning segment. The Cytoplasmic portion of the chain corresponds to 37-48 (RFNSFKVGREYA). Residues 49–69 (VFTFAGMSFNCFLLPIKMGLL) traverse the membrane as a helical segment. Residues 70 to 82 (SGHWSLPRDFCAI) are Extracellular-facing. The helical transmembrane segment at 83–103 (LLYIDDFSIYFSSWSLVFMAI) threads the bilayer. Residues 104 to 122 (ERINHFCYSTPLLNENSKA) lie on the Cytoplasmic side of the membrane. A helical membrane pass occupies residues 123 to 143 (LAKVCFPIVWIISGVQALQML). The Extracellular portion of the chain corresponds to 144-168 (NNYKATALQNETPQCFLAFLRSGYD). The chain crosses the membrane as a helical span at residues 169 to 189 (MWLMLVYSVMIPVMLVFIYIY). The Cytoplasmic segment spans residues 190–199 (SKNFMLLKDE). A helical membrane pass occupies residues 200–220 (LSTVTTYLCIYLLLGTIAHLP). Over 221-238 (KAGLSEIESDKIFYGLRD) the chain is Extracellular. A helical membrane pass occupies residues 239–259 (IFMALPVLKVYYIPVMAYCMA). The Cytoplasmic segment spans residues 260–301 (CDDHTVPVRLCSIWLVNLCKKCFSCTRREKESDLEVGIKMLK).

This sequence belongs to the G-protein coupled receptor 1 family.

Its subcellular location is the host cell membrane. The protein is G-protein coupled receptor homolog U51 (U51) of Homo sapiens (Human).